The chain runs to 531 residues: L-aspartate oxidase (531 aa).

FAD-binding positions include 11-14 (SGAA), K33, 40-47 (NSVYAQGG), 151-152 (TA), and D205. R272 serves as the catalytic Proton donor/acceptor. FAD-binding positions include E353 and 369-370 (SL).

The protein belongs to the FAD-dependent oxidoreductase 2 family. NadB subfamily. As to quaternary structure, monomer. Homodimer. FAD serves as cofactor.

Its subcellular location is the cytoplasm. It catalyses the reaction L-aspartate + O2 = iminosuccinate + H2O2. The enzyme catalyses fumarate + L-aspartate = iminosuccinate + succinate. The protein operates within cofactor biosynthesis; NAD(+) biosynthesis; iminoaspartate from L-aspartate (oxidase route): step 1/1. Catalyzes the oxidation of L-aspartate to iminoaspartate, the first step in the de novo biosynthesis of NAD(+). Can use either oxygen or fumarate as electron acceptors, which allows the enzyme to be functional under aerobic and anaerobic conditions. The polypeptide is L-aspartate oxidase (Bacillus subtilis (strain 168)).